The primary structure comprises 200 residues: ATP-dependent Clp protease proteolytic subunit 2 (200 aa).

Ser-101 acts as the Nucleophile in catalysis. His-126 is a catalytic residue.

This sequence belongs to the peptidase S14 family. As to quaternary structure, fourteen ClpP subunits assemble into 2 heptameric rings which stack back to back to give a disk-like structure with a central cavity, resembling the structure of eukaryotic proteasomes.

The protein resides in the cytoplasm. It carries out the reaction Hydrolysis of proteins to small peptides in the presence of ATP and magnesium. alpha-casein is the usual test substrate. In the absence of ATP, only oligopeptides shorter than five residues are hydrolyzed (such as succinyl-Leu-Tyr-|-NHMec, and Leu-Tyr-Leu-|-Tyr-Trp, in which cleavage of the -Tyr-|-Leu- and -Tyr-|-Trp bonds also occurs).. Functionally, cleaves peptides in various proteins in a process that requires ATP hydrolysis. Has a chymotrypsin-like activity. Plays a major role in the degradation of misfolded proteins. The protein is ATP-dependent Clp protease proteolytic subunit 2 of Prochlorococcus marinus (strain NATL2A).